A 154-amino-acid polypeptide reads, in one-letter code: 17.8 kDa class I heat shock protein (154 aa).

The sHSP domain occupies E40–G154.

It belongs to the small heat shock protein (HSP20) family. As to quaternary structure, forms oligomeric structures.

The protein localises to the cytoplasm. This Solanum lycopersicum (Tomato) protein is 17.8 kDa class I heat shock protein.